A 489-amino-acid polypeptide reads, in one-letter code: Mitochondrial distribution and morphology protein 10 (489 aa).

It belongs to the MDM10 family. In terms of assembly, component of the ER-mitochondria encounter structure (ERMES) or MDM complex, composed of MMM1, MDM10, MDM12 and MDM34. Associates with the mitochondrial outer membrane sorting assembly machinery SAM(core) complex.

The protein resides in the mitochondrion outer membrane. Its function is as follows. Component of the ERMES/MDM complex, which serves as a molecular tether to connect the endoplasmic reticulum and mitochondria. Components of this complex are involved in the control of mitochondrial shape and protein biogenesis and may function in phospholipid exchange. MDM10 is involved in the late assembly steps of the general translocase of the mitochondrial outer membrane (TOM complex). Functions in the TOM40-specific route of the assembly of outer membrane beta-barrel proteins, including the association of TOM40 with the receptor TOM22 and small TOM proteins. Can associate with the SAM(core) complex as well as the MDM12-MMM1 complex, both involved in late steps of the major beta-barrel assembly pathway, that is responsible for biogenesis of all outer membrane beta-barrel proteins. May act as a switch that shuttles between both complexes and channels precursor proteins into the TOM40-specific pathway. Plays a role in mitochondrial morphology and in the inheritance of mitochondria. This Arthroderma otae (strain ATCC MYA-4605 / CBS 113480) (Microsporum canis) protein is Mitochondrial distribution and morphology protein 10.